Here is a 249-residue protein sequence, read N- to C-terminus: MKLNIAYPRNGTVKQFEISDEVLRRVQLQDYRLGNEVDGAIFGSEFKGYIFRLRGGSDKDGFPMVPGVLASSRVSLLVKRGAIGFNTFRGYQGERRRKNVRGCVLASDIALVNVTISKVGDQPIEGVTDTTAPRRLGPKRASKIRKLFNLSRTEDVRKYVVRRRVVKSGKKDRLKAPKIQRLITPRVKARRAKKAKDAIAKVRASAAERREYLRLIASNRRALRQRDHSKKHTRKVHAQRAEVAAFQKK.

The segment covering 223-238 has biased composition (basic residues); that stretch reads LRQRDHSKKHTRKVHA. A disordered region spans residues 223–249; it reads LRQRDHSKKHTRKVHAQRAEVAAFQKK.

This sequence belongs to the eukaryotic ribosomal protein eS6 family. In terms of processing, ribosomal protein S6 is the major substrate of protein kinases in eukaryote ribosomes.

Its function is as follows. Component of the 40S small ribosomal subunit. Plays an important role in controlling cell growth and proliferation through the selective translation of particular classes of mRNA. This is Small ribosomal subunit protein eS6 (RPS6) from Leishmania major.